The primary structure comprises 366 residues: Histidinol-phosphate aminotransferase 2 (366 aa).

K226 carries the post-translational modification N6-(pyridoxal phosphate)lysine.

The protein belongs to the class-II pyridoxal-phosphate-dependent aminotransferase family. Histidinol-phosphate aminotransferase subfamily. As to quaternary structure, homodimer. Pyridoxal 5'-phosphate is required as a cofactor.

The enzyme catalyses L-histidinol phosphate + 2-oxoglutarate = 3-(imidazol-4-yl)-2-oxopropyl phosphate + L-glutamate. It participates in amino-acid biosynthesis; L-histidine biosynthesis; L-histidine from 5-phospho-alpha-D-ribose 1-diphosphate: step 7/9. The sequence is that of Histidinol-phosphate aminotransferase 2 from Haemophilus influenzae (strain 86-028NP).